A 429-amino-acid polypeptide reads, in one-letter code: Adenylosuccinate synthetase (429 aa).

GTP contacts are provided by residues 12–18 and 40–42; these read GDEGKGK and GHT. Residue D13 is the Proton acceptor of the active site. Positions 13 and 40 each coordinate Mg(2+). Residues 13–16, 38–41, T129, R143, Q223, T238, and R302 each bind IMP; these read DEGK and NAGH. H41 (proton donor) is an active-site residue. 298-304 is a binding site for substrate; it reads VVTGRKR. GTP contacts are provided by residues R304, 330–332, and 412–414; these read KLD and STS.

It belongs to the adenylosuccinate synthetase family. As to quaternary structure, homodimer. Mg(2+) serves as cofactor.

Its subcellular location is the cytoplasm. The catalysed reaction is IMP + L-aspartate + GTP = N(6)-(1,2-dicarboxyethyl)-AMP + GDP + phosphate + 2 H(+). It participates in purine metabolism; AMP biosynthesis via de novo pathway; AMP from IMP: step 1/2. Its function is as follows. Plays an important role in the de novo pathway of purine nucleotide biosynthesis. Catalyzes the first committed step in the biosynthesis of AMP from IMP. The sequence is that of Adenylosuccinate synthetase from Brucella anthropi (strain ATCC 49188 / DSM 6882 / CCUG 24695 / JCM 21032 / LMG 3331 / NBRC 15819 / NCTC 12168 / Alc 37) (Ochrobactrum anthropi).